The chain runs to 575 residues: Epsin-1 (575 aa).

A 1,2-diacyl-sn-glycero-3-phospho-(1D-myo-inositol-4,5-bisphosphate)-binding residues include Lys-11, Arg-25, Asn-30, Arg-63, and His-73. Positions 12–144 constitute an ENTH domain; sequence NIVHNYSEAE…RDEDRLREER (133 aa). The segment at 150-186 is disordered; sequence TKEKLAQTATASSAAVGSGPPPEAEQAWPQSSGEEEL. The span at 157–167 shows a compositional bias: low complexity; that stretch reads TATASSAAVGS. 3 UIM domains span residues 183–202, 208–227, and 233–252; these read EEEL…ADQP, EDDV…HDKE, and GDDL…TGGK. Residues 264 to 575 are disordered; sequence FTTPAPPQAS…PAPNTNPFLL (312 aa). A run of 8 repeats spans residues 274-276, 294-296, 306-308, 319-321, 332-334, 349-351, 367-369, and 377-379. Positions 274–379 are 8 X 3 AA repeats of D-P-W; that stretch reads DPWGGPASVP…APAPAFSDPW (106 aa). Composition is skewed to low complexity over residues 279 to 299 and 306 to 316; these read PASV…WGGP and DPWGGAAPTPA. The span at 332–346 shows a compositional bias: low complexity; sequence DPWGGTPAPAAGEGP. Residues 367–379 are compositionally biased toward low complexity; it reads DPWAPAPAFSDPW. At Ser-382 the chain carries Phosphoserine. The short motif at 401 to 410 is the [DE]-X(1,2)-F-X-X-[FL]-X-X-X-R motif element; the sequence is DEFSDFDRLR. Residues Ser-418 and Ser-419 each carry the phosphoserine modification. A Phosphothreonine modification is found at Thr-420. Residues Ser-434, Ser-446, and Ser-453 each carry the phosphoserine modification. A compositionally biased stretch (pro residues) spans 453–467; the sequence is SPPPAATPTPTPPTR. Thr-459, Thr-463, and Thr-469 each carry phosphothreonine. Residue Ser-472 is modified to Phosphoserine. Thr-493 is subject to Phosphothreonine. 2 tandem repeats follow at residues 501–503 and 517–519. Residues 501 to 573 are 3 X 3 AA repeats of N-P-F; it reads NPFLPSGAPP…GPPAPNTNPF (73 aa). Arg-533 bears the Omega-N-methylarginine mark. Residues 556–569 show a composition bias toward pro residues; sequence GLPPMMPPGPPAPN. Repeat 3 spans residues 571–573; that stretch reads NPF.

The protein belongs to the epsin family. In terms of assembly, monomer. Binds clathrin and ZBTB16/ZNF145. Binds ubiquitinated proteins. Interacts with RALBP1 in a complex also containing NUMB and TFAP2A during interphase and mitosis. Interacts with AP2B1. Interacts with UBQLN2. Interacts with ITSN1. Interacts with AP2A1 and AP2A2. Interacts with REPS2; the interaction is direct. Interacts with EPS15; the interaction is direct. Interacts with ENTREP1. Post-translationally, phosphorylated on serine and/or threonine residues in mitotic cells. Phosphorylation reduces interaction with REPS2, AP-2 and the membrane fraction. Depolarization of synaptosomes results in dephosphorylation. Ubiquitinated.

Its subcellular location is the cytoplasm. It is found in the cell membrane. The protein resides in the nucleus. The protein localises to the membrane. It localises to the clathrin-coated pit. Binds to membranes enriched in phosphatidylinositol 4,5-bisphosphate (PtdIns(4,5)P2). Modifies membrane curvature and facilitates the formation of clathrin-coated invaginations. Regulates receptor-mediated endocytosis. This Mus musculus (Mouse) protein is Epsin-1 (Epn1).